The primary structure comprises 729 residues: Monosaccharide-sensing protein 2 (729 aa).

Transmembrane regions (helical) follow at residues 1–21 (MSGA…QGWD), 47–67 (LIVA…GGVA), 81–101 (ILYF…VLLL), 104–124 (LLDG…ISET), 139–159 (FTGS…SLMP), and 165–185 (LMLG…VFFL). Positions 347–363 (VGEGEDYPSDHGDDSED) are enriched in acidic residues. Disordered regions lie at residues 347–367 (VGEG…DLHS) and 423–442 (ERED…RRGS). Basic and acidic residues predominate over residues 423 to 434 (EREDESGQKEEG). Ser-438 and Gly-448 each carry phosphoserine. The next 6 helical transmembrane spans lie at 507–527 (ALVV…NGVL), 553–573 (ASLL…AVAM), 585–605 (LLTT…SNLV), 610–630 (IVHA…FVMG), 650–670 (ICIA…TYSL), and 679–699 (LAGV…FVFI).

It belongs to the major facilitator superfamily. Sugar transporter (TC 2.A.1.1) family. As to expression, mostly expressed in roots and stems, and, to a lower extent, in juvenile and adult leaves, and in flower tissues.

It is found in the vacuole membrane. The catalysed reaction is D-glucose(out) + H(+)(in) = D-glucose(in) + H(+)(out). The enzyme catalyses sucrose(out) + H(+)(in) = sucrose(in) + H(+)(out). Functionally, sugar proton-coupled antiporter which contributes to vacuolar sugar import (e.g. monosaccharides including glucose, sucrose and fructose), particularly during stress responses (e.g. in response to cold). The sequence is that of Monosaccharide-sensing protein 2 from Arabidopsis thaliana (Mouse-ear cress).